Here is a 403-residue protein sequence, read N- to C-terminus: MSDASEKLAQSVLSRSVGIVEPKTARFSEPLALDCGRSLPSYELVYETYGQLNDEGSNAVLICHALSGDHHAAGFHAETDRKPGWWDSAIGPGKPIDTDRFFVVCLNNLGGCKGSTGPLSVDPASGKPYGPDFPIVTVKDWVHAQYRLMQYLGLSGWAAVIGGSLGGMQVLQWSITYPDAVAHAVVIAAAPRLSAQNIAFNEVARQAIITDPEFYGGRYADHNALPRRGLMLARMLGHITYLSDDAMRAKFGRELRAGQVQYGFDVEFQVESYLRYQGTSFVDRFDANTYLLMTKALDYFDPAQASNDDLVAALAEVKAHFLVVSFTSDWRFSPERSREIVRALLASGKQVSYAEIESNHGHDAFLMTIPYYHRVLAGYMANIDFASTPRGVSSPVYSTGGAV.

Residues 58-366 enclose the AB hydrolase-1 domain; that stretch reads NAVLICHALS…ESNHGHDAFL (309 aa). Ser164 functions as the Nucleophile in the catalytic mechanism. Arg234 is a binding site for substrate. Residues Asp329 and His362 contribute to the active site. Residue Asp363 coordinates substrate.

It belongs to the AB hydrolase superfamily. MetX family. As to quaternary structure, homodimer.

The protein resides in the cytoplasm. The catalysed reaction is L-homoserine + succinyl-CoA = O-succinyl-L-homoserine + CoA. The protein operates within amino-acid biosynthesis; L-methionine biosynthesis via de novo pathway; O-succinyl-L-homoserine from L-homoserine: step 1/1. Transfers a succinyl group from succinyl-CoA to L-homoserine, forming succinyl-L-homoserine. The protein is Homoserine O-succinyltransferase of Halothiobacillus neapolitanus (strain ATCC 23641 / c2) (Thiobacillus neapolitanus).